We begin with the raw amino-acid sequence, 226 residues long: Ribonuclease 3 (226 aa).

Residues 5-127 enclose the RNase III domain; the sequence is IFQRGDPIGH…IVAAIYLDCG (123 aa). Glu40 provides a ligand contact to Mg(2+). The active site involves Asp44. Residues Asp113 and Glu116 each coordinate Mg(2+). Residue Glu116 is part of the active site. Positions 154 to 224 constitute a DRBM domain; sequence DPKTRLQEWL…ATLVIAQLDS (71 aa).

This sequence belongs to the ribonuclease III family. Homodimer. Mg(2+) is required as a cofactor.

The protein resides in the cytoplasm. The enzyme catalyses Endonucleolytic cleavage to 5'-phosphomonoester.. In terms of biological role, digests double-stranded RNA. Involved in the processing of primary rRNA transcript to yield the immediate precursors to the large and small rRNAs (23S and 16S). Processes some mRNAs, and tRNAs when they are encoded in the rRNA operon. Processes pre-crRNA and tracrRNA of type II CRISPR loci if present in the organism. This is Ribonuclease 3 from Xanthomonas oryzae pv. oryzae (strain KACC10331 / KXO85).